The sequence spans 593 residues: Dolichyl-phosphooligosaccharide-protein glycotransferase 2 (593 aa).

Residues 1 to 12 (MTPVGMDRKSLS) lie on the Cytoplasmic side of the membrane. A helical transmembrane segment spans residues 13-33 (LLILIVLLGLCIRLQNFGEIF). At 34 to 98 (DSRIYYYGYD…GLFLGFWASE (65 aa)) the chain is on the extracellular side. The short motif at 41–43 (GYD) is the DXD motif 1 element. Mn(2+) is bound at residue Asp43. A helical membrane pass occupies residues 99 to 119 (IFAVVFPVIIGVLCIVLVYLI). The Cytoplasmic portion of the chain corresponds to 120–128 (SLEVLRNEK). Residues 129 to 149 (FALISAFIFSVCPVTVWKSLL) form a helical membrane-spanning segment. The Extracellular segment spans residues 150–154 (GKADH). Asp153 serves as a coordination point for Mn(2+). The DXD motif 2 signature appears at 153–155 (DHH). His154 contributes to the a glycophospholipid binding site. His155 provides a ligand contact to Mn(2+). The chain crosses the membrane as a helical span at residues 155–175 (HIWVVFLLLLSIWLVTKPGLL). Residues 176-180 (KLLSG) lie on the Cytoplasmic side of the membrane. A helical transmembrane segment spans residues 181–201 (IPMLLMALSWLGAPIYAALLA). The Extracellular segment spans residues 202–229 (VSSLFQFNEKEVRIVGISNLIPVLSSIQ). The helical transmembrane segment at 230–250 (NLFLGFSFLAIAVFLLVGSFV) threads the bilayer. Residues 251–265 (KRFERRFRYAIVYYL) are Cytoplasmic-facing. Residues 266–286 (CICSVALLSAYLMPVGWLGFV) traverse the membrane as a helical segment. Topologically, residues 287–310 (KSGISYVLGTDIYLPTIREARSFQ) are extracellular. The TIXE motif signature appears at 302-305 (TIRE). Residues 311–331 (ILGVISSAGYLFFVLAIPALF) form a helical membrane-spanning segment. Met332 is a topological domain (cytoplasmic). Residues 333–353 (LRNGFLKVFFVLSFLISILQL) traverse the membrane as a helical segment. A topological domain (extracellular) is located at residue Arg354. Arg354 is a binding site for a glycophospholipid. Residues 355 to 375 (FVEVLAFPVAILASYTICQIL) form a helical membrane-spanning segment. Topologically, residues 376–411 (ERVDYPVFRKEEEGESKRRGRKEKKKAVEIRKKDHA) are cytoplasmic. A helical membrane pass occupies residues 412-432 (TVIAFLLFLALPCFANSLAPV). Over 433-593 (EMTMDWKEAL…FGTVKIFEVK (161 aa)) the chain is Extracellular. Residues 468-470 (WWD) are interacts with target acceptor peptide in protein substrate. The short motif at 468-472 (WWDYG) is the WWDYG motif element. The DKi motif motif lies at 524–539 (ELTVKPETNKTKFIPI).

The protein belongs to the STT3 family. It depends on Mn(2+) as a cofactor. Mg(2+) is required as a cofactor. Zn(2+) serves as cofactor.

It localises to the cell membrane. It carries out the reaction an archaeal dolichyl phosphooligosaccharide + [protein]-L-asparagine = an archaeal dolichyl phosphate + a glycoprotein with the oligosaccharide chain attached by N-beta-D-glycosyl linkage to a protein L-asparagine.. The protein operates within protein modification; protein glycosylation. Oligosaccharyl transferase (OST) that catalyzes the initial transfer of a defined glycan (a GalNAc-linked heptasaccharide composed of 4 Hex, 3 dHex and a sulfate for A.fulgidus AglB-S) from the lipid carrier dolichol-monophosphate to an asparagine residue within an Asn-X-Ser/Thr consensus motif in nascent polypeptide chains, the first step in protein N-glycosylation. In Archaeoglobus fulgidus (strain ATCC 49558 / DSM 4304 / JCM 9628 / NBRC 100126 / VC-16), this protein is Dolichyl-phosphooligosaccharide-protein glycotransferase 2 (aglB2).